The sequence spans 147 residues: Hemoglobin subunit beta (147 aa).

V2 carries the N-acetylvaline modification. The 145-residue stretch at 3–147 (HLTPEEKSAV…VANALAHKYH (145 aa)) folds into the Globin domain. Position 13 is a phosphothreonine (T13). At S45 the chain carries Phosphoserine. K60 carries the post-translational modification N6-acetyllysine. Residue H64 participates in heme b binding. At K83 the chain carries N6-acetyllysine. H93 lines the heme b pocket. At C94 the chain carries S-nitrosocysteine. The residue at position 145 (K145) is an N6-acetyllysine.

The protein belongs to the globin family. In terms of assembly, heterotetramer of two alpha chains and two beta chains in adult hemoglobin A (HbA). Red blood cells.

Involved in oxygen transport from the lung to the various peripheral tissues. In Pan paniscus (Pygmy chimpanzee), this protein is Hemoglobin subunit beta (HBB).